The following is a 654-amino-acid chain: tRNA 5-methylaminomethyl-2-thiouridine biosynthesis bifunctional protein MnmC (654 aa).

Residues 1–236 (MSTLLQHAQI…KWEVMSGAYV (236 aa)) form a tRNA (mnm(5)s(2)U34)-methyltransferase region. Residues 262–654 (IGAGLAGSTT…FALRRLIRGK (393 aa)) are FAD-dependent cmnm(5)s(2)U34 oxidoreductase.

In the N-terminal section; belongs to the methyltransferase superfamily. tRNA (mnm(5)s(2)U34)-methyltransferase family. It in the C-terminal section; belongs to the DAO family. The cofactor is FAD.

The protein resides in the cytoplasm. The enzyme catalyses 5-aminomethyl-2-thiouridine(34) in tRNA + S-adenosyl-L-methionine = 5-methylaminomethyl-2-thiouridine(34) in tRNA + S-adenosyl-L-homocysteine + H(+). Functionally, catalyzes the last two steps in the biosynthesis of 5-methylaminomethyl-2-thiouridine (mnm(5)s(2)U) at the wobble position (U34) in tRNA. Catalyzes the FAD-dependent demodification of cmnm(5)s(2)U34 to nm(5)s(2)U34, followed by the transfer of a methyl group from S-adenosyl-L-methionine to nm(5)s(2)U34, to form mnm(5)s(2)U34. This Pseudomonas putida (strain GB-1) protein is tRNA 5-methylaminomethyl-2-thiouridine biosynthesis bifunctional protein MnmC.